The primary structure comprises 82 residues: Putative membrane protein insertion efficiency factor (82 aa).

This sequence belongs to the UPF0161 family.

It is found in the cell membrane. Functionally, could be involved in insertion of integral membrane proteins into the membrane. The sequence is that of Putative membrane protein insertion efficiency factor from Streptococcus uberis (strain ATCC BAA-854 / 0140J).